A 97-amino-acid chain; its full sequence is Large ribosomal subunit protein bL27 (97 aa).

Positions 1–12 (MIKLNLSNLQHF) are excised as a propeptide. The tract at residues 13–38 (AHKKGGGSTSNGRDSQAKRLGAKAAD) is disordered.

The protein belongs to the bacterial ribosomal protein bL27 family. The N-terminus is cleaved by ribosomal processing cysteine protease Prp.

The polypeptide is Large ribosomal subunit protein bL27 (Streptococcus equi subsp. equi (strain 4047)).